A 263-amino-acid polypeptide reads, in one-letter code: Taurine import ATP-binding protein TauB (263 aa).

In terms of domain architecture, ABC transporter spans 4-235; the sequence is LTAEAISLSF…RYAAGETVRS (232 aa). Position 40 to 47 (40 to 47) interacts with ATP; that stretch reads GPSGCGKS.

It belongs to the ABC transporter superfamily. Taurine importer (TC 3.A.1.17.1) family. In terms of assembly, the complex is composed of two ATP-binding proteins (TauB), two transmembrane proteins (TauC) and a solute-binding protein (TauA).

The protein resides in the cell inner membrane. It catalyses the reaction taurine(out) + ATP + H2O = taurine(in) + ADP + phosphate + H(+). Its function is as follows. Part of the ABC transporter complex TauABC involved in taurine import. Responsible for energy coupling to the transport system. This Pseudomonas aeruginosa (strain ATCC 15692 / DSM 22644 / CIP 104116 / JCM 14847 / LMG 12228 / 1C / PRS 101 / PAO1) protein is Taurine import ATP-binding protein TauB.